We begin with the raw amino-acid sequence, 292 residues long: NAC domain-containing protein 96 (292 aa).

The region spanning 6–158 (LPPGFRFHPT…AFVLCRVAMK (153 aa)) is the NAC domain. Residues 106 to 164 (IGYRKTLVFYKGRAPLGDRSNWIMHEYRLCDDDTSQGSQNLKGAFVLCRVAMKNEIKTN) mediate DNA binding. The disordered stretch occupies residues 171 to 199 (PSEQTIGSGESSGLSSRVTSPSRDETMPF). A compositionally biased stretch (polar residues) spans 172–191 (SEQTIGSGESSGLSSRVTSP).

In terms of assembly, interacts with ABF2 and ABF4. In terms of tissue distribution, expressed in roots, rosettes leaves, cauline leaves and stems.

It localises to the nucleus. Its function is as follows. Transcriptional activator involved in the positive regulation of abscisic acid (ABA) responsive genes. Acts as a positive factor of ABA-mediated responses. Involved in the transcriptional activation of ABA-inducible genes in response to dehydration and osmotic stresses. Plays a positive role in both stomatal closure and water loss under dehydration stress conditions. Acts synergistically with ABF2 to activate the dehydration stress-response factor RD29A transcription. Binds to the consensus core cis-acting elements 5'-CGTA-3' and 5'-CACG-3' at the RD29A promoter. Involved in hypocotyl graft union formation. Required for the auxin-mediated promotion of vascular tissue proliferation during hypocotyl graft attachment. The protein is NAC domain-containing protein 96 of Arabidopsis thaliana (Mouse-ear cress).